Consider the following 834-residue polypeptide: ATP-dependent DNA helicase fml1 (834 aa).

The region spanning 80–248 (IVQKALFENV…NVIDSLHISR (169 aa)) is the Helicase ATP-binding domain. An ATP-binding site is contributed by 93–100 (LPTGLGKT). The DEAH box motif lies at 196-199 (DEAH). A Helicase C-terminal domain is found at 416 to 582 (HLERIVTEYF…GLSLSEKSYR (167 aa)). The tract at residues 650–690 (EESPFEICPVTYSIEQEKKLEKYKRVCLRGLDIHRNRRLSQ) is interaction with MHF complex. The segment at 738–769 (NSTDRDTKQPKMHDFRQPLHPNPMTTLKRKGQ) is disordered. Positions 740–754 (TDRDTKQPKMHDFRQ) are enriched in basic and acidic residues.

This sequence belongs to the DEAD box helicase family. DEAH subfamily. FANCM sub-subfamily.

It is found in the cytoplasm. The protein resides in the nucleus. It localises to the nucleolus. The catalysed reaction is ATP + H2O = ADP + phosphate + H(+). In terms of biological role, ATP-dependent DNA helicase involved in DNA damage repair by homologous recombination and in genome maintenance. Capable of unwinding D-loops. Plays a role in limiting crossover recombination during mitotic DNA double-strand break (DSB) repair. Component of a FANCM-MHF complex which promotes gene conversion at blocked replication forks, probably by reversal of the stalled fork. FANCM-MHF also promotes non-crossover recombination in meiotic cells. The polypeptide is ATP-dependent DNA helicase fml1 (Schizosaccharomyces pombe (strain 972 / ATCC 24843) (Fission yeast)).